We begin with the raw amino-acid sequence, 353 residues long: tRNA-specific 2-thiouridylase MnmA 2 (353 aa).

ATP-binding positions include 9-16 and methionine 35; that span reads AMSGGVDS. The active-site Nucleophile is cysteine 98. A disulfide bridge connects residues cysteine 98 and cysteine 194. Glycine 122 provides a ligand contact to ATP. The interval 144–146 is interaction with tRNA; the sequence is KDQ. Cysteine 194 serves as the catalytic Cysteine persulfide intermediate. Residues 300 to 301 form an interaction with tRNA region; sequence RY.

It belongs to the MnmA/TRMU family.

It is found in the cytoplasm. It catalyses the reaction S-sulfanyl-L-cysteinyl-[protein] + uridine(34) in tRNA + AH2 + ATP = 2-thiouridine(34) in tRNA + L-cysteinyl-[protein] + A + AMP + diphosphate + H(+). In terms of biological role, catalyzes the 2-thiolation of uridine at the wobble position (U34) of tRNA, leading to the formation of s(2)U34. In Clostridium botulinum (strain Langeland / NCTC 10281 / Type F), this protein is tRNA-specific 2-thiouridylase MnmA 2.